A 99-amino-acid chain; its full sequence is MNTSVDVVTKLIHLQNNVLDIMREVDQYLNSDTPDYTIESLNAPGKQFDFLDEMLTKKLIESNAIVFDEKSKNLKIIHNNINMCLNWCINLITIKHYVQ.

This is an uncharacterized protein from Lepidoptera (butterflies and moths).